A 380-amino-acid polypeptide reads, in one-letter code: Probable G-protein coupled receptor 132 (380 aa).

At 1–45 (MCPMLLKNGYNGNATPVTTTAPWASLGLSAKTCNNVSFEESRIVL) the chain is on the extracellular side. N-linked (GlcNAc...) asparagine glycosylation occurs at asparagine 35. The helical transmembrane segment at 46-68 (VVVYSAVCTLGVPANCLTAWLAL) threads the bilayer. At 69-79 (LQVLQGNVLAV) the chain is on the cytoplasmic side. The chain crosses the membrane as a helical span at residues 80 to 102 (YLLCLALCELLYTGTLPLWVIYI). At 103 to 116 (RNQHRWTLGLLACK) the chain is on the extracellular side. A disulfide bridge links cysteine 115 with cysteine 186. A helical membrane pass occupies residues 117–138 (VTAYIFFCNIYVSILFLCCISC). The Cytoplasmic portion of the chain corresponds to 139-158 (DRFVAVVYALESRGRRRRRT). Residues 159-178 (AILISACIFILVGIVHYPVF) form a helical membrane-spanning segment. The Extracellular segment spans residues 179-197 (QTEDKETCFDMLQMDSRIA). The helical transmembrane segment at 198-220 (GYYYARFTVGFAIPLSIIAFTNH) threads the bilayer. The Cytoplasmic portion of the chain corresponds to 221–246 (RIFRSIKQSMGLSAAQKAKVKHSAIA). The chain crosses the membrane as a helical span at residues 247–269 (VVVIFLVCFAPYHLVLLVKAAAF). Residues 270–288 (SYYRGDRNAMCGLEERLYT) lie on the Extracellular side of the membrane. A helical transmembrane segment spans residues 289 to 311 (ASVVFLCLSTVNGVADPIIYVLA). The Cytoplasmic segment spans residues 312 to 380 (TDHSRQEVSR…PAKRLIEESC (69 aa)).

This sequence belongs to the G-protein coupled receptor 1 family. In terms of tissue distribution, highly expressed in macrophages and hematopoietic tissues rich in lymphocytes, like spleen and thymus. Weakly expressed in heart and lung. In atherosclerotic plaques, expression is observed around the lipid core and at the shoulder region.

The protein localises to the cell membrane. Functionally, may be a receptor for oxidized free fatty acids derived from linoleic and arachidonic acids such as 9-hydroxyoctadecadienoic acid (9-HODE). Activates a G alpha protein, most likely G alpha(q). May be involved in apoptosis. Functions at the G2/M checkpoint to delay mitosis. May function as a sensor that monitors the oxidative states and mediates appropriate cellular responses such as secretion of paracrine signals and attenuation of proliferation. May mediate ths accumulation of intracellular inositol phosphates at acidic pH through proton-sensing activity. The polypeptide is Probable G-protein coupled receptor 132 (GPR132) (Homo sapiens (Human)).